The following is a 368-amino-acid chain: 3-isopropylmalate dehydrogenase (368 aa).

79 to 91 lines the NAD(+) pocket; the sequence is GPEWGTSSTVRPE. Substrate-binding residues include Arg-98, Arg-108, Arg-137, and Asp-226. Positions 226, 251, and 255 each coordinate Mg(2+). Residue 291–303 coordinates NAD(+); that stretch reads GSAPDISGKGIVN.

It belongs to the isocitrate and isopropylmalate dehydrogenases family. Homodimer. Requires Mg(2+) as cofactor. The cofactor is Mn(2+).

The protein resides in the cytoplasm. It carries out the reaction (2R,3S)-3-isopropylmalate + NAD(+) = 4-methyl-2-oxopentanoate + CO2 + NADH. It functions in the pathway amino-acid biosynthesis; L-leucine biosynthesis; L-leucine from 3-methyl-2-oxobutanoate: step 3/4. Its function is as follows. Catalyzes the oxidation of 3-carboxy-2-hydroxy-4-methylpentanoate (3-isopropylmalate) to 3-carboxy-4-methyl-2-oxopentanoate. The product decarboxylates to 4-methyl-2 oxopentanoate. This is 3-isopropylmalate dehydrogenase (leu-1) from Neurospora crassa (strain ATCC 24698 / 74-OR23-1A / CBS 708.71 / DSM 1257 / FGSC 987).